The chain runs to 500 residues: Histidinol dehydrogenase homolog 1 (500 aa).

Residues 1–25 form a disordered region; the sequence is MPPAGGIFHRPPTTRKSRRLTPRSA. Basic residues predominate over residues 12 to 21; that stretch reads PTTRKSRRLT. Residues Gln-313 and His-316 each coordinate Zn(2+). Residues Glu-381 and His-382 each act as proton acceptor in the active site. Zn(2+) is bound by residues Asp-415 and His-475.

It belongs to the histidinol dehydrogenase family. The cofactor is Zn(2+).

The chain is Histidinol dehydrogenase homolog 1 from Mesorhizobium japonicum (strain LMG 29417 / CECT 9101 / MAFF 303099) (Mesorhizobium loti (strain MAFF 303099)).